We begin with the raw amino-acid sequence, 392 residues long: Phosphoglycerate kinase (392 aa).

Residues Asp-21–Asn-23, Arg-36, His-59–Arg-62, Arg-114, and Arg-147 each bind substrate. Residues Lys-198, Glu-320, and Gly-346–Thr-349 contribute to the ATP site.

This sequence belongs to the phosphoglycerate kinase family. As to quaternary structure, monomer.

The protein localises to the cytoplasm. It carries out the reaction (2R)-3-phosphoglycerate + ATP = (2R)-3-phospho-glyceroyl phosphate + ADP. It functions in the pathway carbohydrate degradation; glycolysis; pyruvate from D-glyceraldehyde 3-phosphate: step 2/5. The sequence is that of Phosphoglycerate kinase from Neisseria meningitidis serogroup A / serotype 4A (strain DSM 15465 / Z2491).